Consider the following 289-residue polypeptide: Iodotyrosine deiodinase 1 (289 aa).

The helical transmembrane segment at 1–21 threads the bilayer; the sequence is MYFLTPILVAILCILVVWIFK. Residues 47–58 show a composition bias toward basic and acidic residues; that stretch reads DLKDSSDLHQAE. The tract at residues 47–69 is disordered; it reads DLKDSSDLHQAEEDADEWQESEE. Residues 59–69 are compositionally biased toward acidic residues; that stretch reads EDADEWQESEE. FMN-binding positions include 100 to 104, serine 128, and 128 to 129; these read RRSVR and SG. 3,5-diiodo-L-tyrosine is bound by residues alanine 130, glutamate 157, tyrosine 161, and lysine 182. 3-iodo-L-tyrosine is bound by residues alanine 130, glutamate 157, tyrosine 161, and lysine 182. Residues 237–239 and arginine 279 each bind FMN; that span reads TTT.

This sequence belongs to the nitroreductase family. Homodimer. Requires FMN as cofactor.

Its subcellular location is the cell membrane. The protein resides in the cytoplasmic vesicle membrane. It carries out the reaction 2 iodide + L-tyrosine + 2 NADP(+) = 3,5-diiodo-L-tyrosine + 2 NADPH + H(+). The catalysed reaction is iodide + L-tyrosine + NADP(+) = 3-iodo-L-tyrosine + NADPH. The enzyme catalyses 3-iodo-L-tyrosine + iodide + NADP(+) = 3,5-diiodo-L-tyrosine + NADPH + H(+). It catalyses the reaction L-tyrosine + chloride + NADP(+) = 3-chloro-L-tyrosine + NADPH. It carries out the reaction bromide + L-tyrosine + NADP(+) = 3-bromo-L-tyrosine + NADPH. In terms of biological role, catalyzes the dehalogenation of halotyrosines such as 3-bromo-L-tyrosine, 3-chloro-L-tyrosine, 3-iodo-L-tyrosine and 3,5-diiodo-L-tyrosine. During thyroid hormone biosynthesis, facilitates iodide salvage by catalysing the oxidative NADPH-dependent deiodination of the halogenated by-products of thyroid hormone production, monoiodotyrosine (L-MIT) and diiodotyrosine (L-DIT). The scavanged iodide can then reenter the hormone-producing pathways. Acts more efficiently on 3-iodo-L-tyrosine than 3,5-diiodo-L-tyrosine. The sequence is that of Iodotyrosine deiodinase 1 (IYD) from Pongo abelii (Sumatran orangutan).